The primary structure comprises 265 residues: MSSPSFPRVLIFDSGVGGLSVYREIEARLPQLNYIYLFDNAAYPYGELTQETLIARVDTLVTRMVEQERIDLVVIACNTASTIVLPVLRAKLTIPVVGVVPAIKPASLIASKAIGLIATPATVKRQYTQELIRDFSANKNVELLGSTRLVNMAEEKLRGKPLDLEELASILQPLKNTIDVAVLGCTHFPLIKEEIQQVLGEQVQLIDSGLAIARRVQELLGIEQAVGAKQKHRIYASAPPWEESALNIKLEQLGFNPVQPFLHPI.

Substrate contacts are provided by residues 13-14 and 45-46; these read DS and YG. Residue C77 is the Proton donor/acceptor of the active site. A substrate-binding site is contributed by 78–79; sequence NT. C185 functions as the Proton donor/acceptor in the catalytic mechanism. 186-187 lines the substrate pocket; that stretch reads TH.

This sequence belongs to the aspartate/glutamate racemases family.

It carries out the reaction L-glutamate = D-glutamate. It participates in cell wall biogenesis; peptidoglycan biosynthesis. Functionally, provides the (R)-glutamate required for cell wall biosynthesis. The protein is Glutamate racemase of Vibrio cholerae serotype O1 (strain ATCC 39315 / El Tor Inaba N16961).